Reading from the N-terminus, the 304-residue chain is Bifunctional protein FolD 3 (304 aa).

Residues 172–174 (GRS), S197, and I238 contribute to the NADP(+) site.

It belongs to the tetrahydrofolate dehydrogenase/cyclohydrolase family. In terms of assembly, homodimer.

The enzyme catalyses (6R)-5,10-methylene-5,6,7,8-tetrahydrofolate + NADP(+) = (6R)-5,10-methenyltetrahydrofolate + NADPH. It catalyses the reaction (6R)-5,10-methenyltetrahydrofolate + H2O = (6R)-10-formyltetrahydrofolate + H(+). It participates in one-carbon metabolism; tetrahydrofolate interconversion. Functionally, catalyzes the oxidation of 5,10-methylenetetrahydrofolate to 5,10-methenyltetrahydrofolate and then the hydrolysis of 5,10-methenyltetrahydrofolate to 10-formyltetrahydrofolate. The chain is Bifunctional protein FolD 3 from Rhizorhabdus wittichii (strain DSM 6014 / CCUG 31198 / JCM 15750 / NBRC 105917 / EY 4224 / RW1) (Sphingomonas wittichii).